The sequence spans 374 residues: Queuine tRNA-ribosyltransferase (374 aa).

The active-site Proton acceptor is Asp94. Substrate is bound by residues 94–98, Asp148, Gln191, and Gly218; that span reads DSGGF. The RNA binding stretch occupies residues 249–255; the sequence is GVGSPDY. Asp268 functions as the Nucleophile in the catalytic mechanism. Positions 273-277 are RNA binding; important for wobble base 34 recognition; the sequence is TRIGR. Cys306, Cys308, Cys311, and His337 together coordinate Zn(2+).

The protein belongs to the queuine tRNA-ribosyltransferase family. As to quaternary structure, homodimer. Within each dimer, one monomer is responsible for RNA recognition and catalysis, while the other monomer binds to the replacement base PreQ1. The cofactor is Zn(2+).

It carries out the reaction 7-aminomethyl-7-carbaguanine + guanosine(34) in tRNA = 7-aminomethyl-7-carbaguanosine(34) in tRNA + guanine. Its pathway is tRNA modification; tRNA-queuosine biosynthesis. Functionally, catalyzes the base-exchange of a guanine (G) residue with the queuine precursor 7-aminomethyl-7-deazaguanine (PreQ1) at position 34 (anticodon wobble position) in tRNAs with GU(N) anticodons (tRNA-Asp, -Asn, -His and -Tyr). Catalysis occurs through a double-displacement mechanism. The nucleophile active site attacks the C1' of nucleotide 34 to detach the guanine base from the RNA, forming a covalent enzyme-RNA intermediate. The proton acceptor active site deprotonates the incoming PreQ1, allowing a nucleophilic attack on the C1' of the ribose to form the product. After dissociation, two additional enzymatic reactions on the tRNA convert PreQ1 to queuine (Q), resulting in the hypermodified nucleoside queuosine (7-(((4,5-cis-dihydroxy-2-cyclopenten-1-yl)amino)methyl)-7-deazaguanosine). This Acetivibrio thermocellus (strain ATCC 27405 / DSM 1237 / JCM 9322 / NBRC 103400 / NCIMB 10682 / NRRL B-4536 / VPI 7372) (Clostridium thermocellum) protein is Queuine tRNA-ribosyltransferase.